The sequence spans 483 residues: Probable zinc metalloprotease PTRG_04977 (483 aa).

The N-terminal stretch at 1 to 18 (MLFRSALLSNVLLLPACA) is a signal peptide. N-linked (GlcNAc...) asparagine glycosylation is found at N96 and N121. Positions 167, 187, and 220 each coordinate Zn(2+). N-linked (GlcNAc...) asparagine glycosylation occurs at N235. D247 is a Zn(2+) binding site. 5 N-linked (GlcNAc...) asparagine glycosylation sites follow: N310, N362, N401, N411, and N421. In terms of domain architecture, Fibronectin type-III spans 396–483 (PAMPRNVTID…KSPAVYPFPG (88 aa)).

The protein belongs to the peptidase M28 family. M28B subfamily. Zn(2+) is required as a cofactor.

It is found in the secreted. This Pyrenophora tritici-repentis (strain Pt-1C-BFP) (Wheat tan spot fungus) protein is Probable zinc metalloprotease PTRG_04977.